A 1069-amino-acid polypeptide reads, in one-letter code: Calcium-transporting ATPase 10, plasma membrane-type (1069 aa).

Residues 1 to 29 form a disordered region; the sequence is MSGQFNNSPRGEDKDVEAGTSSFTEYEDS. Ser2 carries the post-translational modification N-acetylserine. The Cytoplasmic segment spans residues 2-180; the sequence is SGQFNNSPRG…NTYPQKKGRS (179 aa). The tract at residues 42-53 is interaction with calmodulin; it reads ERLRRWRQAALV. The chain crosses the membrane as a helical span at residues 181 to 201; it reads FWRFVWEASQDLTLIILIVAA. Residues 202 to 219 lie on the Lumenal side of the membrane; the sequence is VASLALGIKTEGIEKGWY. A helical membrane pass occupies residues 220–240; sequence DGISIAFAVLLVIVVTATSDY. Residues 241–369 lie on the Cytoplasmic side of the membrane; that stretch reads RQSLQFQNLN…GGETPLQVRL (129 aa). A helical transmembrane segment spans residues 370-389; sequence NGVATFIGIVGLTVAGVVLF. Over 390–426 the chain is Lumenal; that stretch reads VLVVRYFTGHTKNEQGGPQFIGGKTKFEHVLDDLVEI. The chain crosses the membrane as a helical span at residues 427-444; sequence FTVAVTIVVVAVPEGLPL. At 445-844 the chain is on the cytoplasmic side; it reads AVTLTLAYSM…RWGRSVYANI (400 aa). Asp482 acts as the 4-aspartylphosphate intermediate in catalysis. Positions 789 and 793 each coordinate Mg(2+). The helical transmembrane segment at 845 to 863 threads the bilayer; it reads QKFIQFQLTVNVAALVINV. Residues 864–874 lie on the Lumenal side of the membrane; the sequence is VAAISAGEVPL. A helical transmembrane segment spans residues 875–895; sequence TAVQLLWVNLIMDTLGALALA. The Cytoplasmic portion of the chain corresponds to 896-915; it reads TEPPTDHLMDRAPVGRREPL. The helical transmembrane segment at 916-938 threads the bilayer; it reads ITNIMWRNLFIQAMYQVTVLLIL. Residues 939 to 951 are Lumenal-facing; sequence NFRGISILHLKSK. A helical transmembrane segment spans residues 952–973; sequence PNAERVKNTVIFNAFVICQVFN. Residues 974–991 lie on the Cytoplasmic side of the membrane; the sequence is EFNARKPDEINIFRGVLR. Residues 992-1013 traverse the membrane as a helical segment; sequence NHLFVGIISITIVLQVVIVEFL. The Lumenal segment spans residues 1014-1023; it reads GTFASTTKLD. Residues 1024 to 1045 traverse the membrane as a helical segment; the sequence is WEMWLVCIGIGSISWPLAVIGK. Topologically, residues 1046–1069 are cytoplasmic; it reads LIPVPETPVSQYFRINRWRRNSSG.

This sequence belongs to the cation transport ATPase (P-type) (TC 3.A.3) family. Type IIB subfamily.

The protein localises to the membrane. The catalysed reaction is Ca(2+)(in) + ATP + H2O = Ca(2+)(out) + ADP + phosphate + H(+). Activated by calmodulin. In terms of biological role, this magnesium-dependent enzyme catalyzes the hydrolysis of ATP coupled with the translocation of calcium from the cytosol into the endoplasmic reticulum. The polypeptide is Calcium-transporting ATPase 10, plasma membrane-type (ACA10) (Arabidopsis thaliana (Mouse-ear cress)).